We begin with the raw amino-acid sequence, 262 residues long: Acyl-[acyl-carrier-protein]--UDP-N-acetylglucosamine O-acyltransferase (262 aa).

It belongs to the transferase hexapeptide repeat family. LpxA subfamily. In terms of assembly, homotrimer.

Its subcellular location is the cytoplasm. It catalyses the reaction a (3R)-hydroxyacyl-[ACP] + UDP-N-acetyl-alpha-D-glucosamine = a UDP-3-O-[(3R)-3-hydroxyacyl]-N-acetyl-alpha-D-glucosamine + holo-[ACP]. Its pathway is glycolipid biosynthesis; lipid IV(A) biosynthesis; lipid IV(A) from (3R)-3-hydroxytetradecanoyl-[acyl-carrier-protein] and UDP-N-acetyl-alpha-D-glucosamine: step 1/6. In terms of biological role, involved in the biosynthesis of lipid A, a phosphorylated glycolipid that anchors the lipopolysaccharide to the outer membrane of the cell. The sequence is that of Acyl-[acyl-carrier-protein]--UDP-N-acetylglucosamine O-acyltransferase from Mannheimia succiniciproducens (strain KCTC 0769BP / MBEL55E).